Consider the following 549-residue polypeptide: Cation/acetate symporter ActP (549 aa).

The next 13 membrane-spanning stretches (helical) occupy residues 33 to 53, 77 to 97, 103 to 123, 148 to 168, 183 to 203, 206 to 226, 262 to 282, 303 to 323, 355 to 375, 404 to 424, 428 to 448, 464 to 484, and 493 to 513; these read WQAI…TYWA, LAIA…ALVF, GLIY…LIAE, ILSA…QMVG, IAVV…GMLA, WVQI…AFMV, ISAL…PHIL, GFMG…IMLV, LFLG…VAGL, VSKI…VLFE, IAFM…PIIL, GGWL…TIWV, and IFPY…GIWF.

Belongs to the sodium:solute symporter (SSF) (TC 2.A.21) family.

It is found in the cell inner membrane. In terms of biological role, transports acetate. The polypeptide is Cation/acetate symporter ActP (Salmonella gallinarum (strain 287/91 / NCTC 13346)).